The chain runs to 219 residues: Probable GTP-binding protein EngB (219 aa).

The region spanning 26–200 (EGVEIAFAGR…RAKLDTWFAP (175 aa)) is the EngB-type G domain. GTP-binding positions include 34–41 (GRSNAGKS), 61–65 (GRTQL), 79–82 (DLPG), 146–149 (TKAD), and 179–181 (FSS). 2 residues coordinate Mg(2+): serine 41 and threonine 63.

Belongs to the TRAFAC class TrmE-Era-EngA-EngB-Septin-like GTPase superfamily. EngB GTPase family. Mg(2+) serves as cofactor.

Its function is as follows. Necessary for normal cell division and for the maintenance of normal septation. This Vibrio parahaemolyticus serotype O3:K6 (strain RIMD 2210633) protein is Probable GTP-binding protein EngB.